The chain runs to 473 residues: Adenosylhomocysteinase (473 aa).

Positions 64, 139, and 199 each coordinate substrate. An NAD(+)-binding site is contributed by 200–202 (TTT). Substrate-binding residues include lysine 229 and aspartate 233. Residues asparagine 234, 263–268 (GYGDVG), glutamate 286, asparagine 321, 342–344 (IGH), and asparagine 387 each bind NAD(+).

Belongs to the adenosylhomocysteinase family. NAD(+) serves as cofactor.

It is found in the cytoplasm. It carries out the reaction S-adenosyl-L-homocysteine + H2O = L-homocysteine + adenosine. It participates in amino-acid biosynthesis; L-homocysteine biosynthesis; L-homocysteine from S-adenosyl-L-homocysteine: step 1/1. May play a key role in the regulation of the intracellular concentration of adenosylhomocysteine. In Burkholderia mallei (strain SAVP1), this protein is Adenosylhomocysteinase.